A 267-amino-acid chain; its full sequence is L-aspartate dehydrogenase 2 (267 aa).

NAD(+) contacts are provided by A123 and N189. The active site involves H219.

This sequence belongs to the L-aspartate dehydrogenase family.

It carries out the reaction L-aspartate + NADP(+) + H2O = oxaloacetate + NH4(+) + NADPH + H(+). It catalyses the reaction L-aspartate + NAD(+) + H2O = oxaloacetate + NH4(+) + NADH + H(+). The protein operates within cofactor biosynthesis; NAD(+) biosynthesis; iminoaspartate from L-aspartate (dehydrogenase route): step 1/1. Specifically catalyzes the NAD or NADP-dependent dehydrogenation of L-aspartate to iminoaspartate. The sequence is that of L-aspartate dehydrogenase 2 from Bordetella bronchiseptica (strain ATCC BAA-588 / NCTC 13252 / RB50) (Alcaligenes bronchisepticus).